Reading from the N-terminus, the 184-residue chain is ATP synthase subunit delta (184 aa).

It belongs to the ATPase delta chain family. In terms of assembly, F-type ATPases have 2 components, F(1) - the catalytic core - and F(0) - the membrane proton channel. F(1) has five subunits: alpha(3), beta(3), gamma(1), delta(1), epsilon(1). F(0) has three main subunits: a(1), b(2) and c(10-14). The alpha and beta chains form an alternating ring which encloses part of the gamma chain. F(1) is attached to F(0) by a central stalk formed by the gamma and epsilon chains, while a peripheral stalk is formed by the delta and b chains.

It is found in the cell inner membrane. In terms of biological role, f(1)F(0) ATP synthase produces ATP from ADP in the presence of a proton or sodium gradient. F-type ATPases consist of two structural domains, F(1) containing the extramembraneous catalytic core and F(0) containing the membrane proton channel, linked together by a central stalk and a peripheral stalk. During catalysis, ATP synthesis in the catalytic domain of F(1) is coupled via a rotary mechanism of the central stalk subunits to proton translocation. Functionally, this protein is part of the stalk that links CF(0) to CF(1). It either transmits conformational changes from CF(0) to CF(1) or is implicated in proton conduction. This is ATP synthase subunit delta from Phenylobacterium zucineum (strain HLK1).